We begin with the raw amino-acid sequence, 570 residues long: NADPH oxidase 2 (570 aa).

The Cytoplasmic portion of the chain corresponds to 2 to 9 (GNWVVNEG). A helical transmembrane segment spans residues 10-36 (ISIFVILVWLGMNVFLFVWYYRVYDIP). The Extracellular portion of the chain corresponds to 37–46 (DKFFYTRKLL). Residues 47 to 72 (GSALALARAPAACLNFNCMLILLPVC) form a helical membrane-spanning segment. The 233-residue stretch at 54–286 (RAPAACLNFN…MFLYLCERLV (233 aa)) folds into the Ferric oxidoreductase domain. Residues 73–95 (RNLLSFLRGSSACCSTRIRRQLD) are Cytoplasmic-facing. The helical transmembrane segment at 96–130 (RNLTFHKMVAWMIALHTAIHTIAHLFNVEWCVNAR) threads the bilayer. Heme b contacts are provided by His-101 and His-115. Residues 131-163 (VNNSDPYSIALSDIGDKPNETYLNFVRQRIKNP) lie on the Extracellular side of the membrane. 2 N-linked (GlcNAc...) asparagine glycosylation sites follow: Asn-132 and Asn-149. Lys-161 is covalently cross-linked (Glycyl lysine isopeptide (Lys-Gly) (interchain with G-Cter in ubiquitin)). The chain crosses the membrane as a helical span at residues 164 to 194 (EGGLYVAVTRLAGITGVVITLCLILIITSST). Over 195–203 (KTIRRSYFE) the chain is Cytoplasmic. The FAD site is built by Arg-199 and Ser-200. The helical transmembrane segment at 204–222 (VFWYTHHLFVIFFIGLAIH) threads the bilayer. Residues Trp-206, His-209, His-222, Arg-226, and Ile-227 each coordinate heme b. Over 223–267 (GAQRIVRGQTAESLLKHQPRNCYQNISQWGKIENCPIPEFSGNPP) the chain is Extracellular. A glycan (N-linked (GlcNAc...) asparagine) is linked at Asn-247. Heme b-binding residues include Met-268, Tyr-280, and Arg-287. The chain crosses the membrane as a helical span at residues 268–285 (MTWKWIVGPMFLYLCERL). Residues 286-570 (VRFWRSQQKV…VHFIFNKENF (285 aa)) are Cytoplasmic-facing. Residues 287–397 (RFWRSQQKVV…DGPFGTASED (111 aa)) enclose the FAD-binding FR-type domain. Glycyl lysine isopeptide (Lys-Gly) (interchain with G-Cter in ubiquitin) cross-links involve residues Lys-294, Lys-299, Lys-306, Lys-328, and Lys-334. Positions 337, 338, 339, 341, 354, 356, 361, and 362 each coordinate FAD. A Glycyl lysine isopeptide (Lys-Gly) (interchain with G-Cter in ubiquitin) cross-link involves residue Lys-381. 3 residues coordinate NADPH: Ile-411, Arg-446, and Thr-481. Lys-506 participates in a covalent cross-link: Glycyl lysine isopeptide (Lys-Gly) (interchain with G-Cter in ubiquitin). Arg-513 lines the NADPH pocket. Lys-567 participates in a covalent cross-link: Glycyl lysine isopeptide (Lys-Gly) (interchain with G-Cter in ubiquitin).

As to quaternary structure, component of the phagocyte NADPH oxidase core complex/cytochrome b558 complex, composed of CYBB (heavy chain (beta)) and CYBA (light chain (alpha)). Component of the phagocyte NADPH oxidase complex composed of an obligatory core heterodimer formed by the membrane proteins CYBA and CYBB and the cytosolic regulatory subunits NCF1/p47-phox, NCF2/p67-phox, NCF4/p40-phox and the small GTPase RAC1 or RAC2. Interacts with NCF1 (phosphorylated form). Interacts with NCF2; the interaction is enhanced in the presence of GBP7. Interacts with RAC2. Interacts with RAC1. Interacts with calprotectin (S100A8/9). Interacts with NRROS; the interaction is direct and impairs formation of a stable NADPH oxidase complex. Interacts with CYBC1; CYBC1 may act as a chaperone stabilizing Cytochrome b-245 heterodimer. The CYBA-CYBB complex interacts with GBP7. FAD serves as cofactor. In terms of processing, glycosylated. Phosphorylated on Ser and Thr residues by PKC during neutrophils activation. Phosphorylation enhances the NADPH oxidase activity and stimulates its interaction with RAC2, NCF2/p67-phox, and NCF1/p47-phox. Post-translationally, undergoes 'Lys-48'-linked polyubiquitination, likely by RNF145, triggering endoplasmic reticulum-associated degradation.

The protein resides in the cell membrane. The enzyme catalyses NADPH + 2 O2 = 2 superoxide + NADP(+) + H(+). Catalytic subunit of the phagocyte NADPH oxidase complex that mediates the transfer of electrons from cytosolic NADPH to O2 to produce the superoxide anion (O2(-)). In the activated complex, electrons are first transferred from NADPH to flavin adenine dinucleotide (FAD) and subsequently transferred via two heme molecules to molecular oxygen, producing superoxide through an outer-sphere reaction. Activation of the NADPH oxidase complex is initiated by the assembly of cytosolic subunits of the NADPH oxidase complex with the core NADPH oxidase complex to form a complex at the plasma membrane or phagosomal membrane. This activation process is initiated by phosphorylation dependent binding of the cytosolic NCF1/p47-phox subunit to the C-terminus of CYBA/p22-phox. NADPH oxidase complex assembly is impaired through interaction with NRROS. In Bos taurus (Bovine), this protein is NADPH oxidase 2.